Consider the following 208-residue polypeptide: Ras-related protein Rab-6B (208 aa).

GTP-binding positions include Gly-20–Thr-27, Thr-45, Asp-68–Gln-72, and Asn-126–Asp-129. The Effector region motif lies at Tyr-42–Phe-50. S-geranylgeranyl cysteine attachment occurs at residues Cys-206 and Cys-208. A Cysteine methyl ester modification is found at Cys-208.

This sequence belongs to the small GTPase superfamily. Rab family. Interacts (GTP-bound) with BICD1 (via C-terminus); the interaction is direct. Interacts (GDP-bound) with DYNLRB1. Interacts (GTP-bound) with APBA1/MINT1. Interacts (GTP-bound) with VPS13B.

It is found in the golgi apparatus membrane. The protein resides in the endoplasmic reticulum-Golgi intermediate compartment. It localises to the cytoplasmic vesicle. The catalysed reaction is GTP + H2O = GDP + phosphate + H(+). Its activity is regulated as follows. Regulated by guanine nucleotide exchange factors (GEFs) which promote the exchange of bound GDP for free GTP, GTPase activating proteins (GAPs) which increase the GTP hydrolysis activity, and GDP dissociation inhibitors which inhibit the dissociation of the nucleotide from the GTPase. The small GTPases Rab are key regulators of intracellular membrane trafficking, from the formation of transport vesicles to their fusion with membranes. Rabs cycle between active GTP-bound and inactive GDP-bound states. In their active state, drive transport of vesicular carriers from donor organelles to acceptor organelles to regulate the membrane traffic that maintains organelle identity and morphology. Recruits VPS13B to the Golgi membrane. Regulates the compacted morphology of the Golgi. Seems to have a role in retrograde membrane traffic at the level of the Golgi complex. May function in retrograde transport in neuronal cells. Plays a role in neuron projection development. The protein is Ras-related protein Rab-6B (RAB6B) of Bos taurus (Bovine).